Here is a 588-residue protein sequence, read N- to C-terminus: Peptidoglycan D,D-transpeptidase FtsI (588 aa).

Residues 19 to 39 traverse the membrane as a helical segment; it reads FISWRFALLCGCILLALAFLL. Ser-307 functions as the Acyl-ester intermediate in the catalytic mechanism. Residues 578-588 constitute a propeptide that is removed on maturation; sequence INQGEGTGGRS.

Belongs to the transpeptidase family. FtsI subfamily.

It is found in the cell inner membrane. It catalyses the reaction Preferential cleavage: (Ac)2-L-Lys-D-Ala-|-D-Ala. Also transpeptidation of peptidyl-alanyl moieties that are N-acyl substituents of D-alanine.. Its pathway is cell wall biogenesis; peptidoglycan biosynthesis. Its function is as follows. Catalyzes cross-linking of the peptidoglycan cell wall at the division septum. The protein is Peptidoglycan D,D-transpeptidase FtsI of Escherichia coli O157:H7.